Consider the following 155-residue polypeptide: Ribosome maturation factor RimP (155 aa).

Belongs to the RimP family.

Its subcellular location is the cytoplasm. Its function is as follows. Required for maturation of 30S ribosomal subunits. This is Ribosome maturation factor RimP from Prochlorococcus marinus (strain MIT 9312).